Consider the following 122-residue polypeptide: Large ribosomal subunit protein uL14 (122 aa).

This sequence belongs to the universal ribosomal protein uL14 family. Part of the 50S ribosomal subunit. Forms a cluster with proteins L3 and L19. In the 70S ribosome, L14 and L19 interact and together make contacts with the 16S rRNA in bridges B5 and B8.

Its function is as follows. Binds to 23S rRNA. Forms part of two intersubunit bridges in the 70S ribosome. The polypeptide is Large ribosomal subunit protein uL14 (Dehalococcoides mccartyi (strain ATCC BAA-2266 / KCTC 15142 / 195) (Dehalococcoides ethenogenes (strain 195))).